The primary structure comprises 161 residues: Cytochrome b6-f complex subunit 4 (161 aa).

3 helical membrane passes run 37–57, 96–116, and 130–150; these read LLYIFPVVIMGTIALVIGLAV, LLGVLMNASIPLGLMLIPFIE, and AMTVFLFGTLVTLWLGIGAAF.

It belongs to the cytochrome b family. PetD subfamily. As to quaternary structure, the 4 large subunits of the cytochrome b6-f complex are cytochrome b6, subunit IV (17 kDa polypeptide, PetD), cytochrome f and the Rieske protein, while the 4 small subunits are PetG, PetL, PetM and PetN. The complex functions as a dimer.

Its subcellular location is the cellular thylakoid membrane. In terms of biological role, component of the cytochrome b6-f complex, which mediates electron transfer between photosystem II (PSII) and photosystem I (PSI), cyclic electron flow around PSI, and state transitions. The chain is Cytochrome b6-f complex subunit 4 from Synechococcus elongatus.